A 341-amino-acid polypeptide reads, in one-letter code: S-adenosylmethionine:tRNA ribosyltransferase-isomerase (341 aa).

Belongs to the QueA family. In terms of assembly, monomer.

It is found in the cytoplasm. It carries out the reaction 7-aminomethyl-7-carbaguanosine(34) in tRNA + S-adenosyl-L-methionine = epoxyqueuosine(34) in tRNA + adenine + L-methionine + 2 H(+). Its pathway is tRNA modification; tRNA-queuosine biosynthesis. In terms of biological role, transfers and isomerizes the ribose moiety from AdoMet to the 7-aminomethyl group of 7-deazaguanine (preQ1-tRNA) to give epoxyqueuosine (oQ-tRNA). The chain is S-adenosylmethionine:tRNA ribosyltransferase-isomerase from Clostridioides difficile (strain 630) (Peptoclostridium difficile).